The primary structure comprises 363 residues: tRNA N6-adenosine threonylcarbamoyltransferase (363 aa).

Fe cation-binding residues include histidine 121 and histidine 125. Substrate is bound by residues 143–147 (LASGG), aspartate 176, glycine 189, and asparagine 287. A Fe cation-binding site is contributed by aspartate 315.

It belongs to the KAE1 / TsaD family. It depends on Fe(2+) as a cofactor.

It is found in the cytoplasm. It carries out the reaction L-threonylcarbamoyladenylate + adenosine(37) in tRNA = N(6)-L-threonylcarbamoyladenosine(37) in tRNA + AMP + H(+). Its function is as follows. Required for the formation of a threonylcarbamoyl group on adenosine at position 37 (t(6)A37) in tRNAs that read codons beginning with adenine. Is involved in the transfer of the threonylcarbamoyl moiety of threonylcarbamoyl-AMP (TC-AMP) to the N6 group of A37, together with TsaE and TsaB. TsaD likely plays a direct catalytic role in this reaction. This chain is tRNA N6-adenosine threonylcarbamoyltransferase, found in Rhodopseudomonas palustris (strain HaA2).